Here is a 368-residue protein sequence, read N- to C-terminus: Spermidine/putrescine import ATP-binding protein PotA (368 aa).

The 231-residue stretch at 6–236 (VSIKNVSKFF…PVNVFAATFI (231 aa)) folds into the ABC transporter domain. ATP is bound at residue 38 to 45 (GPSGCGKT).

The protein belongs to the ABC transporter superfamily. Spermidine/putrescine importer (TC 3.A.1.11.1) family. The complex is composed of two ATP-binding proteins (PotA), two transmembrane proteins (PotB and PotC) and a solute-binding protein (PotD).

The protein resides in the cell inner membrane. It carries out the reaction ATP + H2O + polyamine-[polyamine-binding protein]Side 1 = ADP + phosphate + polyamineSide 2 + [polyamine-binding protein]Side 1.. Functionally, part of the ABC transporter complex PotABCD involved in spermidine/putrescine import. Responsible for energy coupling to the transport system. This is Spermidine/putrescine import ATP-binding protein PotA from Thermotoga maritima (strain ATCC 43589 / DSM 3109 / JCM 10099 / NBRC 100826 / MSB8).